We begin with the raw amino-acid sequence, 449 residues long: Exodeoxyribonuclease 7 large subunit (449 aa).

The protein belongs to the XseA family. Heterooligomer composed of large and small subunits.

The protein localises to the cytoplasm. The enzyme catalyses Exonucleolytic cleavage in either 5'- to 3'- or 3'- to 5'-direction to yield nucleoside 5'-phosphates.. Bidirectionally degrades single-stranded DNA into large acid-insoluble oligonucleotides, which are then degraded further into small acid-soluble oligonucleotides. The polypeptide is Exodeoxyribonuclease 7 large subunit (Salmonella schwarzengrund (strain CVM19633)).